We begin with the raw amino-acid sequence, 498 residues long: NADP-dependent glyceraldehyde-3-phosphate dehydrogenase (498 aa).

Substrate contacts are provided by residues Arg-118 and Asn-171 to Tyr-172. Lys-194, Thr-197, and Asp-232 together coordinate NADP(+). Residue Gly-247–Gly-251 participates in NAD(+) binding. Residue Glu-266 is the Proton acceptor of the active site. Arg-299 to Thr-301 serves as a coordination point for substrate. Catalysis depends on Cys-300, which acts as the Nucleophile. Residue Glu-393 coordinates NADP(+). Arg-453 serves as a coordination point for substrate.

This sequence belongs to the aldehyde dehydrogenase family.

Its subcellular location is the cytoplasm. It carries out the reaction D-glyceraldehyde 3-phosphate + NADP(+) + H2O = (2R)-3-phosphoglycerate + NADPH + 2 H(+). Important as a means of generating NADPH for biosynthetic reactions. The sequence is that of NADP-dependent glyceraldehyde-3-phosphate dehydrogenase (GPN1) from Zea mays (Maize).